Reading from the N-terminus, the 112-residue chain is Large ribosomal subunit protein eL30z (112 aa).

It belongs to the eukaryotic ribosomal protein eL30 family.

The chain is Large ribosomal subunit protein eL30z (RPL30A) from Arabidopsis thaliana (Mouse-ear cress).